Reading from the N-terminus, the 175-residue chain is Riboflavin kinase (175 aa).

54 to 59 contacts CDP; that stretch reads GLGEGK. 2 residues coordinate Mg(2+): T83 and N85. FMN is bound by residues T142 and E150. 155–158 contributes to the CDP binding site; it reads FHLR.

It belongs to the archaeal riboflavin kinase family. Mg(2+) is required as a cofactor.

The enzyme catalyses riboflavin + CTP = CDP + FMN + H(+). The protein operates within cofactor biosynthesis; FMN biosynthesis; FMN from riboflavin (CTP route): step 1/1. Functionally, catalyzes the CTP-dependent phosphorylation of riboflavin (vitamin B2) to form flavin mononucleotide (FMN). This Saccharolobus solfataricus (strain ATCC 35092 / DSM 1617 / JCM 11322 / P2) (Sulfolobus solfataricus) protein is Riboflavin kinase.